Reading from the N-terminus, the 367-residue chain is MGKKKKRATEKVWCYYCDREFDDEKILVQHQKAKHFKCHVCHKKLSTASGMVIHVLQVHKENVTKVPNAKDGRDSTDIEIYGMQGIPPHVLTAHYGEEEDEPPAKVAKVEIPSAPLGGVVPRPYGMVYPPQQVPGAVPARPMYYPGPPMRHPAPVWQMPPPRPQQWYPQNPALSVPPAAHLGYRPQPLFPVQNMGMTPTPTSAPAIQPSPVTGVTPPGIPTSSPAMPVPQPLFPVVNNSIPSQAPPFSAPLPVGGAQQPSHADALGSADAYPPNNSIPGGTNAHSYASGPNTSGPSIGPPPVIANKAPSNQPNEVYLVWDDEAMSMEERRMSLPKYKVHDETSQMNSINAAIDRRISESRLAGRMAF.

The segment at 7 to 66 (RATEKVWCYYCDREFDDEKILVQHQKAKHFKCHVCHKKLSTASGMVIHVLQVHKENVTKV) adopts a BED-type zinc-finger fold. Zn(2+) is bound by residues C38, C41, H54, and H59. The disordered stretch occupies residues 246-309 (PFSAPLPVGG…PPVIANKAPS (64 aa)). The segment covering 273–295 (PNNSIPGGTNAHSYASGPNTSGP) has biased composition (polar residues).

As to quaternary structure, homodimer. Component of the transcription activator complex FRI-C composed of FRI, FRL1, SUF4, FLX and FES1. Interacts with LD, ASHH2, FRL1, (via C-terminus) with FRI (via C-terminus), and with SWC6, a component of the SWR1 chromatin-remodeling complex. Binds to MED18 to regulate flowering time; recruits MED18 to FLC promoter. In terms of tissue distribution, expressed in root, shoot apex, leaves, stem and flowers. Expressed in expanding leaves, in the vasculature of fully expanded leaves, in the inflorescence, throughout young floral primordia, in the carpels of older flowers and in fertilized ovules.

Its subcellular location is the nucleus. Sequence-specific DNA binding factor that recognizes the 5'-CCAAATTTTAAGTTT-3' sequence. Recruits the FRI-C complex to the FLC promoter. Required for FRI-mediated FLC activation, but has no effect on the expression of MAF1, MAF2, MAF3, MAF5, UFC and CO. Dispensable for the reactivation of FLC in early embryogenesis, but required to maintain high levels of FLC expression in later embryonic and vegetative development. The protein is Protein SUPPRESSOR OF FRI 4 of Arabidopsis thaliana (Mouse-ear cress).